The primary structure comprises 203 residues: Endo-type membrane-bound lytic murein transglycosylase A (203 aa).

An N-terminal signal peptide occupies residues 1–15 (MKLRWFAFLVVILAG). Cys-16 is lipidated: N-palmitoyl cysteine. The S-diacylglycerol cysteine moiety is linked to residue Cys-16.

Belongs to the transglycosylase Slt family.

The protein resides in the cell outer membrane. It carries out the reaction Endolytic cleavage of the (1-&gt;4)-beta-glycosidic linkage between N-acetylmuramic acid (MurNAc) and N-acetylglucosamine (GlcNAc) residues in peptidoglycan with concomitant formation of a 1,6-anhydrobond in the MurNAc residue.. Its function is as follows. Murein-degrading enzyme. May play a role in recycling of muropeptides during cell elongation and/or cell division. Preferentially cleaves at a distance of more than two disaccharide units from the ends of the glycan chain. The protein is Endo-type membrane-bound lytic murein transglycosylase A of Salmonella paratyphi C (strain RKS4594).